Consider the following 410-residue polypeptide: FAS1 domain-containing protein CaO19.3004 (410 aa).

Positions 1-18 (MKLSKLLQLAVFSSLVTS) are cleaved as a signal peptide. Basic and acidic residues-rich tracts occupy residues 64–73 (NAKFKRDPKN) and 83–96 (GSAEEEQKDKREPK). The disordered stretch occupies residues 64–98 (NAKFKRDPKNVIDPASLKEGSAEEEQKDKREPKNL). Residues 247 to 407 (NNLLQSILPQ…GFVLIINDSL (161 aa)) form the FAS1 domain.

It is found in the vacuole. The chain is FAS1 domain-containing protein CaO19.3004 from Candida albicans (strain SC5314 / ATCC MYA-2876) (Yeast).